The following is a 707-amino-acid chain: Polyribonucleotide nucleotidyltransferase (707 aa).

Mg(2+)-binding residues include Asp488 and Asp494. Residues 555–615 (PIIKVTKIDP…ENVDNAIALI (61 aa)) enclose the KH domain. The region spanning 625–692 (GEILEGKITR…DLGRLQFKRV (68 aa)) is the S1 motif domain.

This sequence belongs to the polyribonucleotide nucleotidyltransferase family. Mg(2+) serves as cofactor.

The protein localises to the cytoplasm. The catalysed reaction is RNA(n+1) + phosphate = RNA(n) + a ribonucleoside 5'-diphosphate. Involved in mRNA degradation. Catalyzes the phosphorolysis of single-stranded polyribonucleotides processively in the 3'- to 5'-direction. The sequence is that of Polyribonucleotide nucleotidyltransferase from Thermotoga neapolitana (strain ATCC 49049 / DSM 4359 / NBRC 107923 / NS-E).